Here is a 401-residue protein sequence, read N- to C-terminus: Golgi membrane protein 1 (401 aa).

Met-1 carries the N-acetylmethionine modification. Over Met-1–Lys-12 the chain is Cytoplasmic. A helical; Signal-anchor for type II membrane protein membrane pass occupies residues Ser-13–Ala-35. At Ser-36–Leu-401 the chain is on the lumenal side. Positions Val-40–Glu-205 form a coiled coil. An N-linked (GlcNAc...) (complex) asparagine glycan is attached at Asn-109. Asn-144 carries N-linked (GlcNAc...) asparagine glycosylation. Residues Thr-178–Leu-401 form a disordered region. At Ser-187 the chain carries Phosphoserine. The span at Leu-228–Pro-238 shows a compositional bias: polar residues. 2 stretches are compositionally biased toward basic and acidic residues: residues Leu-244–Thr-255 and Glu-264–Val-285. Residues Gly-286 to Glu-295 show a composition bias toward gly residues. Polar residues predominate over residues Gln-298–Asn-312. Ser-309 is modified (phosphoserine; by FAM20C). Over residues Asp-350–Ser-360 the composition is skewed to acidic residues. Residues Glu-381 to Glu-395 are compositionally biased toward basic and acidic residues. Asn-398 carries N-linked (GlcNAc...) asparagine glycosylation.

This sequence belongs to the GOLM family. As to quaternary structure, interacts with DYM. Post-translationally, glycosylated. In terms of processing, phosphorylation sites are present in the extracellular medium. Widely expressed. Highly expressed in colon, prostate, trachea and stomach. Expressed at lower level in testis, muscle, lymphoid tissues, white blood cells and spleen. Predominantly expressed by cells of the epithelial lineage. Expressed at low level in normal liver. Expression significantly increases in virus (HBV, HCV) infected liver. Expression does not increase in liver disease due to non-viral causes (alcohol-induced liver disease, autoimmune hepatitis). Increased expression in hepatocytes appears to be a general feature of advanced liver disease. In liver tissue from patients with adult giant-cell hepatitis (GCH), it is strongly expressed in hepatocytes-derived syncytial giant cells. Constitutively expressed by biliary epithelial cells but not by hepatocytes.

The protein resides in the golgi apparatus. It localises to the cis-Golgi network membrane. Its function is as follows. Unknown. Cellular response protein to viral infection. The chain is Golgi membrane protein 1 (GOLM1) from Homo sapiens (Human).